The following is a 130-amino-acid chain: Small ribosomal subunit protein uS8 (130 aa).

This sequence belongs to the universal ribosomal protein uS8 family. In terms of assembly, part of the 30S ribosomal subunit. Contacts proteins S5 and S12.

In terms of biological role, one of the primary rRNA binding proteins, it binds directly to 16S rRNA central domain where it helps coordinate assembly of the platform of the 30S subunit. The chain is Small ribosomal subunit protein uS8 from Edwardsiella ictaluri (strain 93-146).